The chain runs to 592 residues: Testis-specific serine kinase substrate (592 aa).

Residue Ser-217 is modified to Phosphoserine. Positions 232-308 are disordered; the sequence is QDETPRRQEA…VPAGWGMGPR (77 aa). Residues 234-264 are compositionally biased toward basic and acidic residues; sequence ETPRRQEAELQEPEEKQEPEEKQEPEEKQKP. Positions 269-281 are enriched in polar residues; it reads SWNSLGPAATSQG. Ser-288 is subject to Phosphoserine; by TSSK1 and TSSK2. At Ser-316 the chain carries Phosphoserine. Residues 566-592 are disordered; sequence LEGSTGTMGGGSSAGTPPKQGGSAPEQ.

In terms of processing, phosphorylated on serine residue(s) by STK22A/TSSK1 and STK22B/TSSK2. In terms of tissue distribution, highly expressed in testis. Expressed at low levels in prostate, female breast, placenta, ovary and thymus.

The protein localises to the cytoplasm. It is found in the cytoskeleton. The protein resides in the microtubule organizing center. Its subcellular location is the centrosome. It localises to the centriole. Its function is as follows. May play a role in testicular physiology, most probably in the process of spermatogenesis or spermatid development. This is Testis-specific serine kinase substrate (TSKS) from Homo sapiens (Human).